Here is a 463-residue protein sequence, read N- to C-terminus: Bifunctional protein HldE (463 aa).

The segment at 1–313 is ribokinase; sequence MTGPMAVRTD…RALAALPDTD (313 aa). Residue Asp-258 is part of the active site. Residues 331–463 form a cytidylyltransferase region; that stretch reads AAGGCFDLLH…LLARAAEGAR (133 aa).

It in the N-terminal section; belongs to the carbohydrate kinase PfkB family. In the C-terminal section; belongs to the cytidylyltransferase family. Homodimer.

The catalysed reaction is D-glycero-beta-D-manno-heptose 7-phosphate + ATP = D-glycero-beta-D-manno-heptose 1,7-bisphosphate + ADP + H(+). It carries out the reaction D-glycero-beta-D-manno-heptose 1-phosphate + ATP + H(+) = ADP-D-glycero-beta-D-manno-heptose + diphosphate. It functions in the pathway nucleotide-sugar biosynthesis; ADP-L-glycero-beta-D-manno-heptose biosynthesis; ADP-L-glycero-beta-D-manno-heptose from D-glycero-beta-D-manno-heptose 7-phosphate: step 1/4. The protein operates within nucleotide-sugar biosynthesis; ADP-L-glycero-beta-D-manno-heptose biosynthesis; ADP-L-glycero-beta-D-manno-heptose from D-glycero-beta-D-manno-heptose 7-phosphate: step 3/4. Catalyzes the phosphorylation of D-glycero-D-manno-heptose 7-phosphate at the C-1 position to selectively form D-glycero-beta-D-manno-heptose-1,7-bisphosphate. Functionally, catalyzes the ADP transfer from ATP to D-glycero-beta-D-manno-heptose 1-phosphate, yielding ADP-D-glycero-beta-D-manno-heptose. The polypeptide is Bifunctional protein HldE (Streptomyces coelicolor (strain ATCC BAA-471 / A3(2) / M145)).